The following is a 456-amino-acid chain: Histidine--tRNA ligase (456 aa).

The protein belongs to the class-II aminoacyl-tRNA synthetase family. As to quaternary structure, homodimer.

The protein localises to the cytoplasm. The enzyme catalyses tRNA(His) + L-histidine + ATP = L-histidyl-tRNA(His) + AMP + diphosphate + H(+). This Cupriavidus taiwanensis (strain DSM 17343 / BCRC 17206 / CCUG 44338 / CIP 107171 / LMG 19424 / R1) (Ralstonia taiwanensis (strain LMG 19424)) protein is Histidine--tRNA ligase.